The chain runs to 1321 residues: MELEDGVVYQEEPGGSGAVMSERVSGLAGSIYREFERLIGRYDEEVVKELMPLVVAVLENLDSVFAQDQEHQVELELLRDDNEQLITQYEREKALRKHAEEKFIEFEDSQEQEKKDLQTRVESLESQTRQLELKAKNYADQISRLEEREAELKKEYNALHQRHTEMIHNYMEHLERTKLHQLSGSDQLESTAHSRIRKERPISLGIFPLPAGDGLLTPDAQKGGETPGSEQWKFQELSQPRSHTSLKVSNSPEPQKAVEQEDELSDVSQGGSKATTPASTANSDVATIPTDTPLKEENEGFVKVTDAPNKSEISKHIEVQVAQETRNVSTGSAENEEKSEVQAIIESTPELDMDKDLSGYKGSSTPTKGIENKAFDRNTESLFEELSSAGSGLIGDVDEGADLLGMGREVENLILENTQLLETKNALNIVKNDLIAKVDELTCEKDVLQGELEAVKQAKLKLEEKNRELEEELRKARAEAEDARQKAKDDDDSDIPTAQRKRFTRVEMARVLMERNQYKERLMELQEAVRWTEMIRASRENPAMQEKKRSSIWQFFSRLFSSSSNTTKKPEPPVNLKYNAPTSHVTPSVKKRSSTLSQLPGDKSKAFDFLSEETEASLASRREQKREQYRQVKAHVQKEDGRVQAFGWSLPQKYKQVTNGQGENKMKNLPVPVYLRPLDEKDTSMKLWCAVGVNLSGGKTRDGGSVVGASVFYKDVAGLDTEGSKQRSASQSSLDKLDQELKEQQKELKNQEELSSLVWICTSTHSATKVLIIDAVQPGNILDSFTVCNSHVLCIASVPGARETDYPAGEDLSESGQVDKASLCGSMTSNSSAETDSLLGGITVVGCSAEGVTGAATSPSTNGASPVMDKPPEMEAENSEVDENVPTAEEATEATEGNAGSAEDTVDISQTGVYTEHVFTDPLGVQIPEDLSPVYQSSNDSDAYKDQISVLPNEQDLVREEAQKMSSLLPTMWLGAQNGCLYVHSSVAQWRKCLHSIKLKDSILSIVHVKGIVLVALADGTLAIFHRGVDGQWDLSNYHLLDLGRPHHSIRCMTVVHDKVWCGYRNKIYVVQPKAMKIEKSFDAHPRKESQVRQLAWVGDGVWVSIRLDSTLRLYHAHTYQHLQDVDIEPYVSKMLGTGKLGFSFVRITALMVSCNRLWVGTGNGVIISIPLTETNKTSGVPGNRPGSVIRVYGDENSDKVTPGTFIPYCSMAHAQLCFHGHRDAVKFFVAVPGQVISPQSSSSGTDLTGDKAGPSAQEPGSQTPLKSMLVISGGEGYIDFRMGDEGGESELLGEDLPLEPSVTKAERSHLIVWQVMYGNE.

Methionine 1 is subject to N-acetylmethionine. The region spanning valine 7 to leucine 95 is the RH1 domain. Residues alanine 66–methionine 166 adopt a coiled-coil conformation. Phosphoserine is present on residues serine 109, serine 183, serine 185, serine 194, and serine 203. A disordered region spans residues serine 203–threonine 292. The residue at position 217 (threonine 217) is a Phosphothreonine. Residues glutamate 236–glutamate 253 are compositionally biased toward polar residues. Residues serine 238, serine 251, serine 265, serine 268, and serine 272 each carry the phosphoserine modification. The span at aspartate 266–valine 285 shows a compositional bias: polar residues. The residue at position 292 (threonine 292) is a Phosphothreonine. A phosphoserine mark is found at serine 311, serine 329, serine 332, and serine 347. Threonine 348, threonine 365, and threonine 418 each carry phosphothreonine. Residues arginine 408–methionine 534 adopt a coiled-coil conformation. Positions leucine 473–aspartate 489 are enriched in basic and acidic residues. Disordered regions lie at residues leucine 473–arginine 500 and serine 563–proline 600. The RH2 domain maps to arginine 500 to glutamate 571. Threonine 586 is modified (phosphothreonine). Serine 588 is subject to Phosphoserine. Threonine 595 bears the Phosphothreonine mark. Serine 705, serine 728, serine 730, serine 732, and serine 733 each carry phosphoserine. A coiled-coil region spans residues serine 724–valine 758. A disordered region spans residues glycine 854–valine 906. A compositionally biased stretch (polar residues) spans alanine 855–alanine 864. The span at methionine 874–glutamate 883 shows a compositional bias: acidic residues. Over residues alanine 894–glutamate 903 the composition is skewed to low complexity. Serine 1188 is modified (phosphoserine). The disordered stretch occupies residues proline 1239–leucine 1266. Threonine 1264 is modified (phosphothreonine).

It belongs to the JIP scaffold family. As to quaternary structure, homodimer. The homodimer interacts with ARF6, forming a heterotetramer. Homooligomer. Interacts with MAX, MAPK14, MAP3K3, MYC, KNS2 and MAP2K4. Interaction with KNS2 is important in the formation of ternary complex with MAPK8. Interacts with NFKB1. Interacts with PIP4P1. Interacts with PIKFYVE. In terms of assembly, interacts with MAPK8, MAPK9, MAPK10. Phosphorylated by MAPK8 and MAPK14. Expressed only in testis on the round spermatids of stage I, II and II. Absent in spermatogonia and spermatocyte. In terms of tissue distribution, expressed in testis and in acute myeloid leukemia (AML) patients. As to expression, expressed in testis.

The protein resides in the cytoplasm. It localises to the perinuclear region. It is found in the lysosome membrane. Its subcellular location is the cytoplasmic vesicle. The protein localises to the secretory vesicle. The protein resides in the acrosome. With respect to regulation, may play a role in spermatozoa-egg-interaction. Its function is as follows. The JNK-interacting protein (JIP) group of scaffold proteins selectively mediates JNK signaling by aggregating specific components of the MAPK cascade to form a functional JNK signaling module. Regulates lysosomal positioning by acting as an adapter protein which links PIP4P1-positive lysosomes to the dynein-dynactin complex. Assists PIKFYVE selective functionality in microtubule-based endosome-to-TGN trafficking. This Homo sapiens (Human) protein is C-Jun-amino-terminal kinase-interacting protein 4.